Consider the following 102-residue polypeptide: ATP-dependent Clp protease adapter protein ClpS (102 aa).

This sequence belongs to the ClpS family. Binds to the N-terminal domain of the chaperone ClpA.

In terms of biological role, involved in the modulation of the specificity of the ClpAP-mediated ATP-dependent protein degradation. The sequence is that of ATP-dependent Clp protease adapter protein ClpS from Shewanella woodyi (strain ATCC 51908 / MS32).